The chain runs to 284 residues: Pantothenate synthetase (284 aa).

30-37 is a binding site for ATP; it reads MGNLHDGH. His-37 acts as the Proton donor in catalysis. A (R)-pantoate-binding site is contributed by Gln-61. Gln-61 is a binding site for beta-alanine. 149-152 is a binding site for ATP; it reads GEKD. A (R)-pantoate-binding site is contributed by Gln-155. Residues Ile-178 and 186–189 each bind ATP; that span reads LSSR.

It belongs to the pantothenate synthetase family. Homodimer.

Its subcellular location is the cytoplasm. The catalysed reaction is (R)-pantoate + beta-alanine + ATP = (R)-pantothenate + AMP + diphosphate + H(+). It functions in the pathway cofactor biosynthesis; (R)-pantothenate biosynthesis; (R)-pantothenate from (R)-pantoate and beta-alanine: step 1/1. Functionally, catalyzes the condensation of pantoate with beta-alanine in an ATP-dependent reaction via a pantoyl-adenylate intermediate. The chain is Pantothenate synthetase from Salmonella choleraesuis (strain SC-B67).